The primary structure comprises 118 residues: UPF0102 protein Csac_2148 (118 aa).

This sequence belongs to the UPF0102 family.

This is UPF0102 protein Csac_2148 from Caldicellulosiruptor saccharolyticus (strain ATCC 43494 / DSM 8903 / Tp8T 6331).